The chain runs to 182 residues: Ribulose bisphosphate carboxylase small subunit, chloroplastic 4 (182 aa).

The N-terminal 41 residues, 1–41 (MSAAMMNKSVVLSKQCTKPAATPKVVTSKRSFASTVANKNR), are a transit peptide targeting the chloroplast.

Belongs to the RuBisCO small chain family. In terms of assembly, heterohexadecamer of 8 large and 8 small subunits.

The protein localises to the plastid. Its subcellular location is the chloroplast. Its function is as follows. RuBisCO catalyzes two reactions: the carboxylation of D-ribulose 1,5-bisphosphate, the primary event in carbon dioxide fixation, as well as the oxidative fragmentation of the pentose substrate. Both reactions occur simultaneously and in competition at the same active site. Although the small subunit is not catalytic it is essential for maximal activity. In Acetabularia acetabulum (Mermaid's wine glass), this protein is Ribulose bisphosphate carboxylase small subunit, chloroplastic 4.